A 189-amino-acid chain; its full sequence is Fucolectin-5 (189 aa).

A signal peptide spans 1–31 (MKTCNLTDRMKVKMIMLLFQILAISTLQSDS). The interval 40-189 (QENVAVRGKA…VEVNALLPAN (150 aa)) is F5/8 type C-like. Positions 70, 72, and 81 each coordinate Ca(2+). Disulfide bonds link Cys-82–Cys-178, Cys-114–Cys-115, and Cys-140–Cys-156. His-84 and Arg-111 together coordinate alpha-L-fucose. The Cell attachment site motif lies at 111-113 (RGD). Arg-118 contacts alpha-L-fucose. Ca(2+)-binding residues include Cys-178 and Glu-179.

This sequence belongs to the fucolectin family. As to quaternary structure, homotrimer. Gill mucous cells.

The protein resides in the secreted. Its function is as follows. Acts as a defensive agent. Recognizes blood group fucosylated oligosaccharides including A, B, H and Lewis B-type antigens. Does not recognize Lewis A antigen and has low affinity for monovalent haptens. This is Fucolectin-5 from Anguilla japonica (Japanese eel).